Here is a 265-residue protein sequence, read N- to C-terminus: Small ribosomal subunit protein uS3 (265 aa).

Positions 39–111 constitute a KH type-2 domain; sequence IREFLNENFS…EVILNIIEVR (73 aa). Residues 224–250 form a disordered region; sequence FEAGNQRRGQKRRPRNDQPVKDLNKEK. A compositionally biased stretch (basic and acidic residues) spans 238–250; the sequence is RNDQPVKDLNKEK.

The protein belongs to the universal ribosomal protein uS3 family. In terms of assembly, part of the 30S ribosomal subunit. Forms a tight complex with proteins S10 and S14.

Its function is as follows. Binds the lower part of the 30S subunit head. Binds mRNA in the 70S ribosome, positioning it for translation. This chain is Small ribosomal subunit protein uS3, found in Acholeplasma laidlawii.